The primary structure comprises 481 residues: FAD-linked oxidoreductase afoF (481 aa).

Residues 1–16 form the signal peptide; that stretch reads MRFLLQSITLVAAARA. Residues 52–227 form the FAD-binding PCMH-type domain; the sequence is SEWRPPTWTG…TAATFKMFDQ (176 aa). The N-linked (GlcNAc...) asparagine glycan is linked to Asn-82. At His-92 the chain carries Pros-8alpha-FAD histidine. 6 N-linked (GlcNAc...) asparagine glycosylation sites follow: Asn-196, Asn-241, Asn-276, Asn-309, Asn-312, and Asn-376.

Belongs to the oxygen-dependent FAD-linked oxidoreductase family. Requires FAD as cofactor.

In terms of biological role, FAD-linked oxidoreductase; part of the gene cluster that mediates the biosynthesis of asperfuranone, a probable antitumor agent. The polyketide synthase afoG is responsible for producing the 3,5-dimethyloctadienone moiety from acetyl-CoA, three malonyl-CoA, and two S-adenosyl methionines (SAM). The 3,5-dimethyloctadienone moiety is then loaded onto the SAT domain of afoE and extended with four malonyl-CoA and one SAM, which leads to the formation of 2,4-dihydroxy-6-(5,7-dimethyl-2-oxo-trans-3-trans-5-nonadienyl)-3-methylbenzaldehyde (compound 2) after reductive release and aldol condensation. AfoD is the next enzyme in the biosynthesis sequence and hydroxylates the side chain at the benzylic position of compound 2. After benzylic hydroxylation, a furan ring is formed after five-member ring hemiacetal formation and water elimination. AfoF and afoC are proposed to oxidize the R-diketone proton and to reduce the unconjugated carbonyl group, respectively, to generate asperfuranone. Since no intermediates could be isolated from afoF and afoC deletants, the sequence of these two enzymes is not fully understood. Moreover, since afoC deletant still produces a small amount of asperfuranone, other endogenous oxidoreductases might catalyze the same reaction with much less efficiency. This chain is FAD-linked oxidoreductase afoF, found in Emericella nidulans (strain FGSC A4 / ATCC 38163 / CBS 112.46 / NRRL 194 / M139) (Aspergillus nidulans).